The primary structure comprises 293 residues: Nucleotide-binding protein CKR_3143 (293 aa).

Residue 8 to 15 (GLSGAGKT) participates in ATP binding. Position 59 to 62 (59 to 62 (DIRG)) interacts with GTP.

It belongs to the RapZ-like family.

In terms of biological role, displays ATPase and GTPase activities. This is Nucleotide-binding protein CKR_3143 from Clostridium kluyveri (strain NBRC 12016).